We begin with the raw amino-acid sequence, 18141 residues long: Titin (18141 aa).

The segment covering 1-31 (MQRQNPNPYQQQNQQHQQVQQFSSQEYSHSS) has biased composition (low complexity). Residues 1 to 69 (MQRQNPNPYQ…QHHGGSIGGA (69 aa)) are disordered. Basic and acidic residues predominate over residues 32–47 (QEQHQEQRISRTEQHV). Low complexity predominate over residues 48 to 62 (QRSQVTTQRQVQQHH). Ig-like domains lie at 86–177 (PPVF…VYIQ), 255–343 (PQIS…AVLA), 372–461 (PAFV…AQLN), 471–559 (PQFV…ARLY), 618–708 (PQFI…AILS), 751–842 (PQFI…SSIR), 890–981 (PQFK…AQLT), 1024–1115 (PRFL…ATMI), 1158–1249 (PVFV…ACVR), 1291–1381 (PQFT…CSVR), 1424–1515 (PRFL…VELQ), 1558–1643 (PVFT…EAIT), 1691–1781 (PVFT…ASLI), 1824–1917 (PVFV…LNVT), 1958–2050 (PQFG…VNVT), 2089–2180 (PIFL…CNVR), and 2222–2313 (PHFT…TNLR). A disordered region spans residues 236 to 266 (EQDSQLSQELDRNQGPAQAPQISQKPRSSKL). Cys-393 and Cys-445 are disulfide-bonded. 3 cysteine pairs are disulfide-bonded: Cys-1312–Cys-1365, Cys-1446–Cys-1499, and Cys-1579–Cys-1632. An intrachain disulfide couples Cys-1846 to Cys-1899. Cys-2111 and Cys-2164 form a disulfide bridge. Residues 2338–2347 (STAPHQRQEP) show a composition bias toward basic and acidic residues. Residues 2338–2357 (STAPHQRQEPETPGTRQRPV) form a disordered region. 3 consecutive Ig-like domains span residues 2356 to 2449 (PVFT…MRVV), 2488 to 2581 (PIFT…MKVK), and 2622 to 2715 (PVFT…LKIE). The segment at 2731–2750 (PRIGELEAPKEGRPEAPEPT) is disordered. Positions 2734-2746 (GELEAPKEGRPEA) are enriched in basic and acidic residues. Ig-like domains follow at residues 2754-2844 (PVFI…GTLK), 2891-2983 (PPVW…TTIF), 3029-3116 (PRFT…AEIS), 3130-3221 (PRFT…TTLN), 3263-3354 (PKFI…ASLK), 3401-3494 (PVFT…MKIQ), 3539-3625 (PEFI…ATVS), 3676-3767 (PKFT…AKVT), and 3811-3901 (PKFT…ATVS). A disulfide bridge links Cys-2775 with Cys-2828. A disulfide bridge connects residues Cys-3152 and Cys-3205. 3 cysteine pairs are disulfide-bonded: Cys-3560–Cys-3613, Cys-3698–Cys-3751, and Cys-3832–Cys-3885. The stretch at 3910–3944 (LQNQVPRGMKRSDALTQMEATIKKYTSEVHLTEDD) is one TPR 1 repeat. 2 Ig-like domains span residues 3954-4047 (PRFV…IKVS) and 4092-4181 (PVFV…LKVV). Cys-3976 and Cys-4029 are joined by a disulfide. Residues 4204–4229 (AAYQKERQENELEKVFDERKQVLSEQ) are a coiled coil. Disordered stretches follow at residues 4226–4254 (LSEQSSHTLKGVEHLKPKQYKPPTPDWQQ) and 4299–4336 (SSQAKGMAQSYEENLQEKTSTTEVQAAPPKGIAQPSES). Positions 4309–4322 (YEENLQEKTSTTEV) are enriched in polar residues. Ig-like domains lie at 4394–4482 (PVFT…ANLV), 4497–4585 (PSFV…GDCI), 4604–4692 (PHIV…AQLK), and 4703–4791 (PTIT…AKLT). Residues 4403-4438 (CRVFENEQAKFEVEFEGEPNPTVKWYRESFPIQNSP) form a TPR 2 repeat. Residues Cys-4625 and Cys-4676 are joined by a disulfide bond. Disordered regions lie at residues 4803 to 4891 (RTID…DKGV), 5318 to 5368 (DELV…QPEP), 5413 to 5648 (RVIP…EVDA), 5667 to 5701 (IKKTKRPKSTKEVTEELFEEQPEEEISPEEEVPQK), 5718 to 5748 (KKTKKPKLTQQVTEEETPHEEIIKESEEVVQ), 5775 to 5982 (KEEE…QRLL), 6034 to 6350 (KRVK…MPVD), and 6364 to 6393 (EEEVVPTEETPEAKQKAHKKRTKRLKEASV). Low complexity predominate over residues 4822-4841 (PESPHAFQPGQQPGQQFGQF). Over residues 4852 to 4863 (GRSRQKKPKVRS) the composition is skewed to basic residues. 5 stretches are compositionally biased toward basic and acidic residues: residues 5344–5357 (QPQEKTFEEAHDEL), 5436–5447 (RPKEAVKAEEIQ), 5541–5552 (QKPDEQKQELPK), 5591–5621 (IEEKLDVAPTKTYEKAVDVLPDEPKVEEKPE), and 5633–5645 (PKSEPTEEVHPDE). A TPR 3 repeat occupies 5575–5613 (PVLWERKKKKPQPQDVIEEKLDVAPTKTYEKAVDVLPDE). Positions 5681–5697 (EELFEEQPEEEISPEEE) are enriched in acidic residues. Acidic residues-rich tracts occupy residues 5779 to 5792 (IPTEETVEEEETAE) and 5818 to 5860 (DVEE…QDEI). Residues 5865-5874 (RKVKKAKKPK) show a composition bias toward basic residues. Residues 5883–5904 (EIEEDQPEEEVLQEEIIGEQEE) are compositionally biased toward acidic residues. Residues 5910-5920 (RKVKSIKKPKK) show a composition bias toward basic residues. Positions 5921–5971 (VVTEKTVDQTEQPEKPEESQAEEVKETVTEEPKKPKPAPEEAKVEQVEKIS) are enriched in basic and acidic residues. Over residues 6034–6043 (KRVKKKKPKT) the composition is skewed to basic residues. Acidic residues predominate over residues 6049–6079 (ESTEEPAEETEEFEEEATQPEEVQPVEEIPE). 6 stretches are compositionally biased toward basic and acidic residues: residues 6081 to 6092 (PQVKEVADERKT), 6099 to 6133 (RKEEIIEKVEEVALKRVTRPKKELPQEATIEEVRL), 6141 to 6169 (IKPEEVKLEEVDLQHVEKKEDEIVQEEKR), 6195 to 6209 (EAEHIELEKQPKPEE), 6217 to 6234 (KRGEKKQPVEEVLEEKKW), and 6259 to 6268 (PIEEQQKPEK). Residues 6281-6290 (PESEEEELEL) show a composition bias toward acidic residues. Basic and acidic residues predominate over residues 6291–6306 (EPLKLPEDKKPKEPKA). Residues 6307–6318 (KKEKKKKPKLKK) show a composition bias toward basic residues. Composition is skewed to acidic residues over residues 6325-6349 (EVSEEVAEPFDEPIAEEDEVEEMPV) and 6364-6373 (EEEVVPTEET). Ig-like domains lie at 6536–6624 (PRIT…TNII), 6633–6728 (PQFT…NILS), 6741–6830 (PTVT…VVVS), 6841–6929 (PRFI…ATVN), 6942–7034 (PRFV…VKIQ), 7066–7151 (PKII…VAVT), and 7189–7279 (PSLL…FDIS). Cys-6557 and Cys-6608 are oxidised to a cystine. The cysteines at positions 6964 and 7016 are disulfide-linked. Residues 7621–7663 (KIQVQTKQIAQMNTKIKKHKKHKQQEQEVSETTIQCEQKETLA) are a coiled coil. Disordered stretches follow at residues 7773–7793 (AKTAESSKELPSKIPKSVKAQ), 9414–9440 (EEDDKQPETTVTVEEVPYEEEKPEEIQ), 9485–9510 (EEDDKQPETTVTVEEVPYEEEKPEEI), 9556–9582 (EEDDKQPETTVTVEEVPYEEEKPEEIQ), 9627–9652 (EEDDKQPETTVTVEEVPYEEEKPEEI), 9698–9724 (EEDDKQPETTVTVEEVPYEEEKPEEIQ), 9769–9796 (EEDDKQPETTVTVEEVPYEEEKPEEIQE), 9838–9865 (TAEEDDKQPETTVTVEEVPYEEEKPEEI), 9911–9937 (EEDDKQPETTVTVEEVPYEEEKPEEIQ), 9982–10008 (EEDDKQPETTVTVEEVPYEEEKPEEIQ), 10053–10080 (EEDDKQPETTVTVEEVPYEEEKPEEIQE), 10125–10149 (ENDKQPETTVTVEEVPYEEEKPEEI), 10195–10220 (EEDDKQPKTTVTVEEVPYEEEKPEEI), 10266–10291 (EEDDKQPETTVTVEEVPYEEEKPEEI), 10337–10364 (EEDDKQPETTVTVEEVPYEEEKPEEIQE), 10408–10433 (EEDDKQPETTVTVEEVPYEEEKPEEI), 10479–10504 (EEDDKQPETTVTVEEVPYEEEKPEEI), 10550–10576 (EEDDKQPETTVTVEEVPYEEEKPEEIQ), 10621–10648 (EEDDKQPETTVTVEEVPYEEEKPEEIQE), 10692–10717 (EEDDKQPETTVTVEEVPYEEEKPEEI), 10763–10788 (EEDDKQPETTVTVEEVPYEEEKPEEI), 10834–10860 (EEDDKQPETTVTVEEVPYEEEKPEEIQ), 10905–10932 (EEDDKQPETTVTVEEVPYEEEKPEEIQE), 11047–11073 (EEDDKQPETTVTVEEVPYEEEKPEEIQ), 11118–11143 (EEDDKQPETTVTVEEVPYEEEKPEEI), 11189–11216 (EEDDKQPETTVTVEEVPYEEEKPEEIQE), 11260–11286 (EEDDKQPETTVTVEEVPYEEEKPEEIQ), 11679–11703 (EELDENKKPKKKTTKTRTFKKRGPD), and 11767–11795 (TEPEEASADALQKPTKDKTPKQKKTLETP). Over residues 7774–7783 (KTAESSKELP) the composition is skewed to basic and acidic residues. Composition is skewed to acidic residues over residues 9429 to 9440 (VPYEEEKPEEIQ), 9500 to 9510 (VPYEEEKPEEI), 9571 to 9582 (VPYEEEKPEEIQ), 9642 to 9652 (VPYEEEKPEEI), 9713 to 9724 (VPYEEEKPEEIQ), 9784 to 9796 (VPYEEEKPEEIQE), 9855 to 9865 (VPYEEEKPEEI), 9926 to 9937 (VPYEEEKPEEIQ), 9997 to 10008 (VPYEEEKPEEIQ), 10068 to 10080 (VPYEEEKPEEIQE), 10139 to 10149 (VPYEEEKPEEI), 10210 to 10220 (VPYEEEKPEEI), 10281 to 10291 (VPYEEEKPEEI), 10352 to 10364 (VPYEEEKPEEIQE), 10423 to 10433 (VPYEEEKPEEI), 10494 to 10504 (VPYEEEKPEEI), 10565 to 10576 (VPYEEEKPEEIQ), 10636 to 10648 (VPYEEEKPEEIQE), 10707 to 10717 (VPYEEEKPEEI), 10778 to 10788 (VPYEEEKPEEI), 10849 to 10860 (VPYEEEKPEEIQ), 10920 to 10932 (VPYEEEKPEEIQE), 11062 to 11073 (VPYEEEKPEEIQ), 11133 to 11143 (VPYEEEKPEEI), 11204 to 11216 (VPYEEEKPEEIQE), and 11275 to 11286 (VPYEEEKPEEIQ). Basic residues predominate over residues 11686–11699 (KPKKKTTKTRTFKK). Basic and acidic residues predominate over residues 11780 to 11792 (PTKDKTPKQKKTL). The stretch at 11872–11905 (KTVLQPYQRTEMELPQRARRDSSFKQPVKLTPMK) is one TPR 4 repeat. 18 disordered regions span residues 12003–12201 (FKHS…ADTK), 12451–12471 (TLQVGVTEHEPTKKLKTKKPE), 12685–12767 (TVDD…LPGP), 12943–12971 (IDHENAEEAPKVLKSKVSEEKPKSKKEKS), 13131–13154 (IKKKKVSPKHGPKEQVFEITETRP), 13325–13349 (QSFESPEPTEGEAHETKTKTKKPKK), 13471–13492 (EEYEPTEMDSKKKPKKKVKSHN), 13554–13576 (EADKPIKQPTQDQPIKKEKPLKK), 13702–13792 (KVQK…KSPD), 13891–13914 (EEVQEKSKEAPEEKKAKTVRKAKK), 13951–13994 (MKRK…DEPK), 14073–14094 (TTVPTETPDQDQPSVKQKRTKK), 14109–14322 (EEEA…QVTT), 14354–14377 (EYEPEPVNQDEKPKEPKKKTRKVK), 14414–14448 (PLDSPIDVLDESPKEVQKKDKKSRSTKVPNEETPV), 14533–14566 (EPEIASPQSIEEHPEQSKEKLAPKPKKTVRKVKK), 14583–14720 (KVDL…SELP), and 14756–14789 (VEESQPIVEEVEDEEPQPATEETVEDVTKPKSKK). Composition is skewed to basic and acidic residues over residues 12022–12035 (ESDHSDKSNKELLH), 12044–12054 (EKIETPDESRK), 12124–12134 (MERTSDIREES), 12183–12201 (LNLRKRQGERPDDDKADTK), 12457–12471 (TEHEPTKKLKTKKPE), and 12685–12709 (TVDDVRVPKDKKKKIDNQKKIKISE). The span at 12731–12741 (HDEDLQTDEYS) shows a compositional bias: acidic residues. Over residues 12750–12760 (KSKKKSTKKQK) the composition is skewed to basic residues. The span at 13141–13154 (GPKEQVFEITETRP) shows a compositional bias: basic and acidic residues. Residues 13482–13492 (KKPKKKVKSHN) show a composition bias toward basic residues. Residues 13566 to 13599 (QPIKKEKPLKKKKDVEYPVSLEAFDHTVKVVSEP) form a TPR 5 repeat. Basic and acidic residues predominate over residues 13733 to 13747 (LVKEDLDQPIERALE). The segment covering 13771–13781 (PKPKKISKPKS) has biased composition (basic residues). Basic and acidic residues-rich tracts occupy residues 13893 to 13906 (VQEKSKEAPEEKKA) and 13975 to 13984 (EDKPVEKISE). A compositionally biased stretch (basic and acidic residues) spans 14221 to 14240 (TVEKPLEALHTDSDLEKPDV). The span at 14264–14274 (KISSEQPKQPS) shows a compositional bias: low complexity. A compositionally biased stretch (basic and acidic residues) spans 14282–14294 (VTEHDLKPEEEKP). Residues 14542 to 14554 (IEEHPEQSKEKLA) show a composition bias toward basic and acidic residues. Residues 14555–14564 (PKPKKTVRKV) are compositionally biased toward basic residues. Residues 14583–14599 (KVDLEKYEKVEMPEKPV) are compositionally biased toward basic and acidic residues. Residues 14652 to 14662 (ETTVDTTDIPE) show a composition bias toward low complexity. The segment covering 14664–14683 (TPTQTAQPEDTATAQITPSA) has biased composition (polar residues). Over residues 14684–14697 (QEEKSTQDDTKDTI) the composition is skewed to basic and acidic residues. A compositionally biased stretch (acidic residues) spans 14756 to 14771 (VEESQPIVEEVEDEEP). The stretch at 14904–14936 (IPKTTDIGAIKDNGELSRNIEEAEEILKFKPHK) is one TPR 6 repeat. Disordered regions lie at residues 14956–15208 (EKYI…VSVK), 15301–15329 (TRKKKPKPQQPEEFEVTLKEPKEEQIQPD), 15425–15448 (ISETQSIEEKPIEVAEEAPEETPK), 15578–15597 (IRVSESEPKPEEPSVEQFTV), 15697–15722 (EKPAEAIVEEEEPVVTEPIEEAPKPE), 15825–15876 (EEPK…VEEP), 15951–15973 (ESQPEAVEDKEVSLPKKKPKAPI), and 16181–16206 (QEEEYEEGEDIEEFVVSQQRKPKPLQ). Basic and acidic residues-rich tracts occupy residues 14967–14989 (EKTPYKKPEKAPKPEEKQEDVKL), 15024–15046 (ELKQKPKEVEIVEEQTKKPKDGE), 15069–15080 (QIEHPEIPEKVK), 15088–15097 (KPKDKSKSEP), 15109–15139 (PKEEEAIPEQDVKFRKPERDAPEETDSEIKL), 15169–15179 (IEDKAIDDEKK), 15189–15198 (QPKEQEIAKE), 15316–15325 (VTLKEPKEEQ), 15425–15437 (ISETQSIEEKPIE), and 15578–15589 (IRVSESEPKPEE). The segment covering 15703–15716 (IVEEEEPVVTEPIE) has biased composition (acidic residues). The span at 15951-15964 (ESQPEAVEDKEVSL) shows a compositional bias: basic and acidic residues. Positions 16183–16193 (EEYEEGEDIEE) are enriched in acidic residues. The 62-residue stretch at 16409–16470 (ENLNIMYSIC…PAQYLMEPEE (62 aa)) folds into the SH3 domain. Ig-like domains follow at residues 16501–16590 (PRFI…TELI), 16625–16719 (PTFS…ITLK), 16728–16811 (PQIL…ANLT), 16822–16916 (PPLF…VEVD), 16919–17001 (TFTK…STVE), 17007–17091 (PDFI…CELV), 17097–17180 (PEIV…AKLT), 17184–17270 (PLVD…TKLC), and 17277–17363 (PPVI…AEAS). An intrachain disulfide couples Cys-16940 to Cys-16989. The Fibronectin type-III 1 domain maps to 17374-17467 (APGTPQPLEI…LSPPIRLVPK (94 aa)). Ig-like domains are found at residues 17473 to 17558 (PSVQ…CRLK) and 17563 to 17653 (PVLE…CTVQ). A disulfide bridge links Cys-17494 with Cys-17542. Fibronectin type-III domains lie at 17660 to 17755 (RPQS…TKKF), 17760 to 17861 (PPRG…TPPS), 17862 to 17958 (PPQN…THAS), and 17982 to 18078 (PPTG…AMTA). The stretch at 17694 to 17728 (LEKCDVQNNVWMKVSDFNKDIKSYAVQKLSMNAQY) is one TPR 7 repeat. The tract at residues 17741-17771 (SEPTESDPVTITKKFEKPSPPRGPTTVSGMN) is disordered.

This sequence belongs to the protein kinase superfamily. CAMK Ser/Thr protein kinase family. As to quaternary structure, interacts with Msp300; this interaction mediates the recruitment of Msp300 to the Z-disks. In terms of tissue distribution, expressed in the mesoderm at stage 11, several hours before myoblast fusion, and persists in most muscle cells, somatic, visceral and pharyngeal muscles and their precursors, until the third instar. Isoform A: Expressed in the indirect flight muscle (at protein level).

It localises to the cytoplasm. The protein resides in the nucleus. It is found in the chromosome. Its subcellular location is the myofibril. The protein localises to the sarcomere. It localises to the z line. Functionally, key component in the assembly and functioning of adult and embryonic striated muscles and muscle tendons. By providing connections at the level of individual microfilaments, it contributes to the fine balance of forces between the two halves of the sarcomere. The size and extensibility of the cross-links are the main determinants of sarcomere extensibility properties of muscle. In non-muscle cells, seems to play a role in chromosome condensation and chromosome segregation during mitosis. Might link the lamina network to chromatin or nuclear actin, or both during interphase. The polypeptide is Titin (sls) (Drosophila melanogaster (Fruit fly)).